Here is a 691-residue protein sequence, read N- to C-terminus: Threonine--tRNA ligase (691 aa).

The 69-residue stretch at Met1–Pro69 folds into the TGS domain. The tract at residues Asp268 to Pro574 is catalytic. Positions 373, 424, and 551 each coordinate Zn(2+).

It belongs to the class-II aminoacyl-tRNA synthetase family. Homodimer. Zn(2+) serves as cofactor.

The protein localises to the cytoplasm. The enzyme catalyses tRNA(Thr) + L-threonine + ATP = L-threonyl-tRNA(Thr) + AMP + diphosphate + H(+). Catalyzes the attachment of threonine to tRNA(Thr) in a two-step reaction: L-threonine is first activated by ATP to form Thr-AMP and then transferred to the acceptor end of tRNA(Thr). Also edits incorrectly charged L-seryl-tRNA(Thr). This is Threonine--tRNA ligase from Corynebacterium jeikeium (strain K411).